A 587-amino-acid chain; its full sequence is DELLA protein GAIP-B (587 aa).

The interval 1–23 (MKREHHHLHPRPDPPSMAAAPNG) is disordered. A DELLA motif motif is present at residues 46–50 (DELLA). A GRAS domain is found at 209-577 (VDSQENGIQL…RPLIVTSAWK (369 aa)). Positions 216–270 (IQLVHALMACAEAVQQNNLNLAEALEKRIGYLAVSQAGAMRKVATFFAEALARRI) are leucine repeat I (LRI). Residues 288–353 (QLHFYESSPY…SGPPAFRLTG (66 aa)) form a VHIID region. A VHIID motif is present at residues 319–323 (VHVID). The segment at 367–399 (DVGWKLAKLVETINVEFEYRGFVANSLADLDAS) is leucine repeat II (LRII). The segment at 411–498 (VVVNSVFELH…EMYLGKQICN (88 aa)) is PFYRE. Positions 419–423 (LHKLL) match the LXXLL motif motif. An SAW region spans residues 501–577 (ACEGSDRVEW…RPLIVTSAWK (77 aa)).

It belongs to the GRAS family. DELLA subfamily. Post-translationally, phosphorylated. Ubiquitinated. Upon GA application it is ubiquitinated, leading to its subsequent degradation.

Its subcellular location is the nucleus. Functionally, probable transcriptional regulator that acts as a repressor of the gibberellin (GA) signaling pathway. Probably acts by participating in large multiprotein complexes that represses transcription of GA-inducible genes. Upon GA application, it is degraded by the proteasome, allowing the GA signaling pathway. The protein is DELLA protein GAIP-B (GAIPB) of Cucurbita maxima (Pumpkin).